A 250-amino-acid chain; its full sequence is Ribosomal RNA small subunit methyltransferase J (250 aa).

S-adenosyl-L-methionine contacts are provided by residues 101–102, 117–118, 153–154, and Asp171; these read RD, ER, and SS.

It belongs to the methyltransferase superfamily. RsmJ family.

The protein resides in the cytoplasm. It catalyses the reaction guanosine(1516) in 16S rRNA + S-adenosyl-L-methionine = N(2)-methylguanosine(1516) in 16S rRNA + S-adenosyl-L-homocysteine + H(+). Specifically methylates the guanosine in position 1516 of 16S rRNA. This is Ribosomal RNA small subunit methyltransferase J from Klebsiella pneumoniae (strain 342).